The following is a 431-amino-acid chain: Adenylosuccinate synthetase (431 aa).

GTP-binding positions include 13–19 and 41–43; these read GDEGKGK and GHT. Asp-14 (proton acceptor) is an active-site residue. Mg(2+) contacts are provided by Asp-14 and Gly-41. IMP contacts are provided by residues 14-17, 39-42, Thr-130, Arg-144, Gln-225, Thr-240, and Arg-306; these read DEGK and NAGH. His-42 (proton donor) is an active-site residue. 302–308 serves as a coordination point for substrate; sequence ATTGRQR. Residues Arg-308, 334 to 336, and 416 to 418 each bind GTP; these read KLD and STG.

This sequence belongs to the adenylosuccinate synthetase family. Homodimer. Requires Mg(2+) as cofactor.

It localises to the cytoplasm. It catalyses the reaction IMP + L-aspartate + GTP = N(6)-(1,2-dicarboxyethyl)-AMP + GDP + phosphate + 2 H(+). It participates in purine metabolism; AMP biosynthesis via de novo pathway; AMP from IMP: step 1/2. Functionally, plays an important role in the de novo pathway of purine nucleotide biosynthesis. Catalyzes the first committed step in the biosynthesis of AMP from IMP. The protein is Adenylosuccinate synthetase of Halorhodospira halophila (strain DSM 244 / SL1) (Ectothiorhodospira halophila (strain DSM 244 / SL1)).